The sequence spans 207 residues: uncharacterized protein (207 aa).

It is found in the mitochondrion. This is an uncharacterized protein from Marchantia polymorpha (Common liverwort).